Reading from the N-terminus, the 130-residue chain is Small ribosomal subunit protein uS11c (130 aa).

Belongs to the universal ribosomal protein uS11 family. As to quaternary structure, part of the 30S ribosomal subunit.

It localises to the plastid. The protein resides in the chloroplast. The protein is Small ribosomal subunit protein uS11c of Guillardia theta (Cryptophyte).